The sequence spans 1148 residues: Putative transcription factor SEF1 (1148 aa).

The interval 1-51 (MVKDNRDSDQDQDFSSAHMKRQPEQQQLQQHQFPSKKQRISHHDDSHQINH) is disordered. Ser8 is modified (phosphoserine). The segment at residues 57–87 (CTHCRQHKIKCDASQNFPHPCSRCEKIGLHC) is a DNA-binding region (zn(2)-C6 fungal-type). The tract at residues 148 to 180 (PTPGTIIPNPDSSPSSGSPTSSAAQRDSKVSVQ) is disordered. The span at 150–169 (PGTIIPNPDSSPSSGSPTSS) shows a compositional bias: low complexity. A Phosphoserine modification is found at Ser263. The disordered stretch occupies residues 524–550 (EESEEDNNDSIDNNNNDKRNKKDEPHV). The segment covering 538–550 (NNDKRNKKDEPHV) has biased composition (basic and acidic residues). Residue Ser806 is modified to Phosphoserine. Positions 1029-1050 (RSQSSMSHSRTPIASKSNNMTD) are enriched in polar residues. Residues 1029–1063 (RSQSSMSHSRTPIASKSNNMTDLHSVVSDPGSSKS) are disordered.

It localises to the nucleus. Functionally, putative transcription factor that seems to be involved in the sporulation process. Suppresses the lethal phenotype of RPM2 deletion. This Saccharomyces cerevisiae (strain ATCC 204508 / S288c) (Baker's yeast) protein is Putative transcription factor SEF1 (SEF1).